The following is a 519-amino-acid chain: Cytochrome P450 monooxygenase apdE (519 aa).

Residues Phe27 to Tyr47 traverse the membrane as a helical segment. N-linked (GlcNAc...) asparagine glycosylation is found at Asn327 and Asn379. Cys466 contributes to the heme binding site. Asn508 carries N-linked (GlcNAc...) asparagine glycosylation.

The protein belongs to the cytochrome P450 family. The cofactor is heme.

It localises to the membrane. It participates in secondary metabolite biosynthesis. Cytochrome P450 monooxygenase; part of the gene cluster that mediates the biosynthesis of aspyridones. The polyketide-amino acid backbone preaspyridone A is first assembled by the PKS-NRPS hybrid apdA. The assembly of preaspyridone A is initiated by loading of malonyl-CoA onto apdA, followed by decarboxylation to yield the acetyl starter unit. The growing polyketide chain then elongates into a tetraketide. The adpA PKS module catalyzes three Claisen condensations, as well as beta-keto processing and methylation. Alpha-methylation step during polyketide synthesis is a prerequisite and a key checkpoint for chain transfer between PKS and NRPS modules. The downstream NRPS module contains the condensation (C), adenylation (A), and thiolation (T) domains and catalyzes the incorporation of tyrosine via the formation of the L-tyrosinyl-thioester and the amide linkage between L-tyrosinyl-thioester and the tetraketide. The bimodular assembly line is terminated with a reductase (R) domain that facilitates formation and release of the tetramic acid product. Because apdA lacks a designated enoylreductase (ER) domain, the required activity is provided the enoyl reductase apdC. ApdC appears to operate with different stereoselectivity in different PKS cycle. Combined with apdC, apdA is proposed to synthesize preaspyridone A via about 20 enzymatic steps. A number of oxidative steps performed successively by the cytochrome P450 monooxygenases apdE and apdB are required for the conversion of preaspyridone A to aspyridone A. The cytochrome P450 monooxygenase apdE is responsible for the oxidative dephenylation of preaspyridone A. Finally, the predicted FAD-dependent monooxygenase apdD and the acyl-CoA dehydrogenase apdG may be involved in the transformation of aspyridone A into aspyridone B. In Emericella nidulans (strain FGSC A4 / ATCC 38163 / CBS 112.46 / NRRL 194 / M139) (Aspergillus nidulans), this protein is Cytochrome P450 monooxygenase apdE.